The sequence spans 508 residues: Lysine--tRNA ligase (508 aa).

Mg(2+) is bound by residues E416 and E423.

This sequence belongs to the class-II aminoacyl-tRNA synthetase family. Homodimer. Requires Mg(2+) as cofactor.

It localises to the cytoplasm. The catalysed reaction is tRNA(Lys) + L-lysine + ATP = L-lysyl-tRNA(Lys) + AMP + diphosphate. This chain is Lysine--tRNA ligase, found in Prochlorococcus marinus (strain MIT 9313).